The sequence spans 159 residues: Protein NrdI (159 aa).

The protein belongs to the NrdI family.

In terms of biological role, probably involved in ribonucleotide reductase function. The protein is Protein NrdI of Rhodococcus erythropolis (strain PR4 / NBRC 100887).